The chain runs to 378 residues: Putative glutamate--cysteine ligase 2 (378 aa).

This sequence belongs to the glutamate--cysteine ligase type 2 family. YbdK subfamily.

It carries out the reaction L-cysteine + L-glutamate + ATP = gamma-L-glutamyl-L-cysteine + ADP + phosphate + H(+). In terms of biological role, ATP-dependent carboxylate-amine ligase which exhibits weak glutamate--cysteine ligase activity. The protein is Putative glutamate--cysteine ligase 2 of Leifsonia xyli subsp. xyli (strain CTCB07).